Consider the following 91-residue polypeptide: Large ribosomal subunit protein bL27 (91 aa).

The disordered stretch occupies residues 1-21 (MAHKKAGGSSRNGRDSESKRL).

Belongs to the bacterial ribosomal protein bL27 family.

The sequence is that of Large ribosomal subunit protein bL27 from Azoarcus sp. (strain BH72).